We begin with the raw amino-acid sequence, 177 residues long: MALNLSQKQEVVAELADVAAKAHSLIAAEYAGTTVSQMTAMRKQARETGVFLKVVKNTLAARAVEGTDFAVAADKLVGPLLYAFSMEEPGAAGRLIKEFAKSNDKLQAKVVSIGGELFPAGHVDVLASLPTRDQALAMLARVLSEPAAMFARAVKAVGDKQGGGDAAAAAVAETAEA.

This sequence belongs to the universal ribosomal protein uL10 family. As to quaternary structure, part of the ribosomal stalk of the 50S ribosomal subunit. The N-terminus interacts with L11 and the large rRNA to form the base of the stalk. The C-terminus forms an elongated spine to which L12 dimers bind in a sequential fashion forming a multimeric L10(L12)X complex.

Forms part of the ribosomal stalk, playing a central role in the interaction of the ribosome with GTP-bound translation factors. The sequence is that of Large ribosomal subunit protein uL10 from Xanthomonas oryzae pv. oryzae (strain MAFF 311018).